A 420-amino-acid polypeptide reads, in one-letter code: MRWRTILLQYCFLLITCLLTALEAVPIDIDKTKVQNIHPVESAKIEPPDTGLYYDEYLKQVIDVLETDKHFREKLQKADIEEIKSGRLSKELDLVSHHVRTKLDELKRQEVGRLRMLIKAKLDSLQDIGMDHQALLKQFDHLNHLNPDKFESTDLDMLIKAATSDLEHYDKTRHEEFKKYEMMKEHERREYLKTLNEEKRKEEESKFEEMKKKHENHPKVNHPGSKDQLKEVWEETDGLDPNDFDPKTFFKLHDVNSDGFLDEQELEALFTKELEKVYDPKNEEDDMVEMEEERLRMREHVMNEVDTNKDRLVTLEEFLKATEKKEFLEPDSWETLDQQQFFTEEELKEYENIIALQENELKKKADELQKQKEELQRQHDQLEAQKLEYHQVIQQMEQKKLQQGIPPSGPAGELKFEPHI.

A signal peptide spans M1 to A24. Residues K171–P223 mediate DNA binding. Residues L195–K212 show a composition bias toward basic and acidic residues. Residues L195–S225 are disordered. The tract at residues K213–I420 is binds to necdin. EF-hand domains are found at residues P241 to K276 and E293 to L328. Ca(2+) is bound by residues D254 and N256. Residue S257 is modified to Phosphoserine. Residues D258, E265, D306, N308, D310, and E317 each coordinate Ca(2+). Positions E304 to E334 match the GBA motif. At S332 the chain carries Phosphoserine. The tract at residues Q398–I420 is disordered.

It belongs to the nucleobindin family. As to quaternary structure, interacts (via GBA motif) with guanine nucleotide-binding protein G(i) alpha subunit GNAI3. Preferentially interacts with inactive rather than active GNAI3. Interaction with GNAI3 is inhibited when NUCB2 binds calcium, probably due to a conformational change which renders the GBA motif inaccessible. Binds to the postmitotic growth suppressor NDN; coexpression abolishes NUCB2 secretion. Interacts with MC4R. In terms of tissue distribution, predominantly expressed in spleen, testis and normal stomach.

It localises to the golgi apparatus. It is found in the membrane. The protein resides in the cytoplasm. The protein localises to the secreted. Its subcellular location is the endoplasmic reticulum. It localises to the nucleus envelope. Its function is as follows. Calcium-binding protein which may have a role in calcium homeostasis. Acts as a non-receptor guanine nucleotide exchange factor which binds to and activates guanine nucleotide-binding protein (G-protein) alpha subunit GNAI3. Functionally, anorexigenic peptide, seems to play an important role in hypothalamic pathways regulating food intake and energy homeostasis, acting in a leptin-independent manner. May also exert hypertensive roles and modulate blood pressure through directly acting on peripheral arterial resistance. In intestinal epithelial cells, plays a role in the inhibition of hepatic glucose production via MC4R receptor leading to increased cyclic adenosine monophosphate (cAMP) levels and glucagon-like peptide 1 (GLP-1) secretion. The chain is Nucleobindin-2 from Homo sapiens (Human).